Here is a 509-residue protein sequence, read N- to C-terminus: MVDGVMILPVLVMIAFPFPSMEDEKPKVNPKLYMCVCEGLSCGDEAHCEGQQCFSSLSINDGFHVYQKGCFQVYEQGKMTCKTPPSPGQAVECCQGDWCNRNITAQLPTKGKSFPGTQNFHLEVGLIILSVVFAVCLLACLLGVALRKFKRRNQERLNPRDVEYGTIEGLITTNVGDSTLADLLDHSCTSGSGSGLPFLVQRTVARQITLLECVGKGRYGEVWRGSWQGENVAVKIFSSRDEKSWFRETELYNTVMLRHENILGFIASDMTSRHSSTQLWLITHYHEMGSLYDYLQLTTLDTVSCLRIVLSIASGLAHLHIEIFGTQGKPAIAHRDLKSKNILVKKNGQCCIADLGLAVMHSQSTNQLDVGNNPRVGTKRYMAPEVLDETIQVDCFDSYKRVDIWAFGLVLWEVARRMVSNGIVEDYKPPFYDVVPNDPSFEDMRKVVCVDQQRPNIPNRWFSDPTLTSLAKLMKECWYQNPSARLTALRIKKTLTKIDNSLDKLKTDC.

Positions 1 to 20 (MVDGVMILPVLVMIAFPFPS) are cleaved as a signal peptide. The Extracellular segment spans residues 21–123 (MEDEKPKVNP…FPGTQNFHLE (103 aa)). The N-linked (GlcNAc...) asparagine glycan is linked to Asn-102. Residues 124–146 (VGLIILSVVFAVCLLACLLGVAL) form a helical membrane-spanning segment. At 147 to 509 (RKFKRRNQER…NSLDKLKTDC (363 aa)) the chain is on the cytoplasmic side. The 30-residue stretch at 178–207 (STLADLLDHSCTSGSGSGLPFLVQRTVARQ) folds into the GS domain. A Protein kinase domain is found at 208–502 (ITLLECVGKG…KTLTKIDNSL (295 aa)). ATP contacts are provided by residues 214–222 (VGKGRYGEV) and Lys-235. Catalysis depends on Asp-336, which acts as the Proton acceptor. At Ser-501 the chain carries Phosphoserine.

This sequence belongs to the protein kinase superfamily. TKL Ser/Thr protein kinase family. TGFB receptor subfamily. As to quaternary structure, interacts with FKBP1A. Interacts with FCHO1. Interacts with CLU. Interacts with type II receptors AMHR2 and ACVR2A. Interacts with BMP7. Interacts with BMP9. Interacts with BMP6 (when glycosylated); the interaction may induce HAMP expression. Interacts with TSC22D1/TSC-22. The cofactor is Mg(2+). Requires Mn(2+) as cofactor.

Its subcellular location is the membrane. The catalysed reaction is L-threonyl-[receptor-protein] + ATP = O-phospho-L-threonyl-[receptor-protein] + ADP + H(+). It catalyses the reaction L-seryl-[receptor-protein] + ATP = O-phospho-L-seryl-[receptor-protein] + ADP + H(+). Its function is as follows. Bone morphogenetic protein (BMP) type I receptor that is involved in a wide variety of biological processes, including bone, heart, cartilage, nervous, and reproductive system development and regulation. As a type I receptor, forms heterotetrameric receptor complexes with the type II receptors AMHR2, ACVR2A ors ACVR2B. Upon binding of ligands such as BMP7 or BMP9 to the heteromeric complexes, type II receptors transphosphorylate ACVR1 intracellular domain. In turn, ACVR1 kinase domain is activated and subsequently phosphorylates SMAD1/5/8 proteins that transduce the signal. In addition to its role in mediating BMP pathway-specific signaling, suppresses TGFbeta/activin pathway signaling by interfering with the binding of activin to its type II receptor. Besides canonical SMAD signaling, can activate non-canonical signaling pathways. May promote the expression of HAMP, potentially via its interaction with BMP6. This is Activin receptor type-1 (ACVR1) from Bos taurus (Bovine).